A 37-amino-acid polypeptide reads, in one-letter code: Tick defensin 2 (37 aa).

Disulfide bonds link Cys4/Cys26, Cys11/Cys34, and Cys15/Cys36.

This sequence belongs to the invertebrate defensin family.

The protein localises to the secreted. Functionally, antibacterial peptide mostly active against Gram-positive bacteria (MIC=0.24 ug/ml on Bacillus subtilis, and MIC=0.94 ug/ml on Micrococcus luteus, MIC&gt;120 ug/ml on both Escherichia coli and Pseudomonas aeruginosa). The chain is Tick defensin 2 from Ornithodoros savignyi (African eyed tampan).